Here is a 369-residue protein sequence, read N- to C-terminus: Putative protein FAM10A5 (369 aa).

The disordered stretch occupies residues 38–98; that stretch reads MGGKVPPATQ…IEPDTDAPQE (61 aa). A compositionally biased stretch (basic and acidic residues) spans 49 to 73; sequence AKSEENTKEEKPDSKKVEEDLKADE. Residues 89-98 are compositionally biased toward acidic residues; sequence IEPDTDAPQE. TPR repeat units lie at residues 114-147, 149-181, and 183-215; these read ANDKKVAAIEVLNDGELQKAIDLFTDAIKLNPRL, ILYAKRASVFVKLQKPNAAIQDCDRAIEINPDS, and QPYKWRGKAHRLLGHWEEAAHDLAFACKLDYDE. Basic and acidic residues predominate over residues 256-272; the sequence is KAQEEQERAQREEEARR. The interval 256–300 is disordered; it reads KAQEEQERAQREEEARRQSGAHYGPFPGGFPGGMPGNFPGGMPGM. Residues 281–300 show a composition bias toward gly residues; that stretch reads FPGGFPGGMPGNFPGGMPGM. One can recognise an STI1 domain in the interval 319 to 358; that stretch reads DPEALAAMQDPEVMVAFQDVAQNPANMSKYQSNPKVMNLI. S346 carries the phosphoserine modification. N6-acetyllysine occurs at positions 353 and 360.

This sequence belongs to the FAM10 family.

It localises to the cytoplasm. The polypeptide is Putative protein FAM10A5 (ST13P5) (Homo sapiens (Human)).